Here is a 182-residue protein sequence, read N- to C-terminus: uncharacterized protein (182 aa).

The next 2 helical transmembrane spans lie at 29–49 (IISGLFLGLALLSTYLIAGLP) and 63–83 (FYFPFFMTIGFINLIISMLTL).

The protein resides in the cell membrane. This is an uncharacterized protein from Ureaplasma parvum serovar 3 (strain ATCC 700970).